A 492-amino-acid chain; its full sequence is MPQVTKTNNENEFRLTRSKVQHQESISTIKNTTISNSQHKQQTQQQISSPPQVSVTSSEGVSHVNTRQYLGDVSNQYITNAKPTNKRKPLGGDNAPLQKQQHRPSRPIPIASDNNNNGSTSSSSNSSNNNNNDANRLASLAVPSRLPQKRQATESSTNLVEKLRVPQPEVGERSQSYHKKSRLIDYEWQDLDEEDSDDQLMVSEYVNEIFSYYYELETRMLPDPQYLFKQTLLKPRMRSILVDWLVEMHLKFKLLPESLFLAVNVMDRFMSVEVVQIDKLQLLATAALFTAAKYEEVFSPSVKNYAYFTDGSYTPEEVVQAEKYMLTILNFDLNYPNPMNFLRRISKADDYDVQSRTLGKYLLEITIVDYKFIGMRPSLCCASAMYLARLILGKLPVWNGNLIHYSGGYRISDMRECIELMFQYLIAPIEHDEFFKKYAMRKFMRASTLCRNWAKKFQASGRDLFDERLSTHRLTLEDDDEEEEIVVAEAEE.

A disordered region spans residues 1 to 176 (MPQVTKTNNE…QPEVGERSQS (176 aa)). A compositionally biased stretch (polar residues) spans 23–33 (QESISTIKNTT). Over residues 34–58 (ISNSQHKQQTQQQISSPPQVSVTSS) the composition is skewed to low complexity. Residues 59–83 (EGVSHVNTRQYLGDVSNQYITNAKP) show a composition bias toward polar residues. Over residues 111–135 (ASDNNNNGSTSSSSNSSNNNNNDAN) the composition is skewed to low complexity. Residues 208–334 (EIFSYYYELE…MLTILNFDLN (127 aa)) form the Cyclin N-terminal domain.

It belongs to the cyclin family. Cyclin AB subfamily.

Functionally, 2/mitotic-specific cyclin essential for the control of the cell cycle at the G2/M (mitosis) transition. G2/M cyclins accumulate steadily during G2 and are abruptly destroyed at mitosis. Degradation is necessary for the cell to exit from mitosis. Plays a role in morphogenesis by negatively regulating polarized growth. Through binding to CDC28 regulates cytokinesis, partly by phosphorylation of the actomyosin ring component IQG1. Also involved in the phosphorylation of CDC6 and CDC54. In Candida albicans (strain SC5314 / ATCC MYA-2876) (Yeast), this protein is G2/mitotic-specific cyclin CLB2 (CLB2).